The primary structure comprises 535 residues: Calcium-dependent protein kinase 5 (535 aa).

Residues 1–46 form a disordered region; that stretch reads MGNACRGSFGGKTFQGYPQPQDHSESNSNPKHNSDSPKPKKEQQPL. Gly2 is lipidated: N-myristoyl glycine. Cys5 carries S-palmitoyl cysteine lipidation. Positions 32 to 43 are enriched in basic and acidic residues; that stretch reads HNSDSPKPKKEQ. The Protein kinase domain occupies 72–330; that stretch reads YTLGRKLGQG…AHEVLCHPWI (259 aa). ATP contacts are provided by residues 78–86 and Lys101; that span reads LGQGQFGTT. The active-site Proton acceptor is Asp196. The segment at 336–366 is autoinhibitory domain; it reads APDRALDPAVLSRLKHFSAMNKLKKMALRVI. 4 consecutive EF-hand domains span residues 373-408, 409-444, 445-480, and 484-514; these read EEIA…YGST, LKDI…LNKL, DREE…HNIT, and FEDI…GNPC. Ca(2+)-binding residues include Asp386, Asp388, Ser390, Glu397, Asp422, Asp424, Ser426, Thr428, Glu433, Asp458, Asp460, Ser462, Tyr464, Glu469, Asp492, Asp494, Asp496, Arg498, and Glu503.

Belongs to the protein kinase superfamily. Ser/Thr protein kinase family. CDPK subfamily.

The protein localises to the cell membrane. The enzyme catalyses L-seryl-[protein] + ATP = O-phospho-L-seryl-[protein] + ADP + H(+). It catalyses the reaction L-threonyl-[protein] + ATP = O-phospho-L-threonyl-[protein] + ADP + H(+). Activated by calcium. Autophosphorylation may play an important role in the regulation of the kinase activity. In terms of biological role, regulates the production of reactive oxygen species (ROS) by NADPH oxidase. The polypeptide is Calcium-dependent protein kinase 5 (CPK5) (Solanum tuberosum (Potato)).